A 275-amino-acid polypeptide reads, in one-letter code: Formamidopyrimidine-DNA glycosylase (275 aa).

The Schiff-base intermediate with DNA role is filled by proline 2. Glutamate 3 (proton donor) is an active-site residue. Catalysis depends on lysine 60, which acts as the Proton donor; for beta-elimination activity. Residues histidine 93 and arginine 112 each contribute to the DNA site. The FPG-type zinc-finger motif lies at 240–274; that stretch reads FVYGRKDEPCKKCGSPIEKTVVGGRGTHFCIKCQK. Arginine 264 serves as the catalytic Proton donor; for delta-elimination activity.

It belongs to the FPG family. Monomer. Zn(2+) serves as cofactor.

The catalysed reaction is Hydrolysis of DNA containing ring-opened 7-methylguanine residues, releasing 2,6-diamino-4-hydroxy-5-(N-methyl)formamidopyrimidine.. The enzyme catalyses 2'-deoxyribonucleotide-(2'-deoxyribose 5'-phosphate)-2'-deoxyribonucleotide-DNA = a 3'-end 2'-deoxyribonucleotide-(2,3-dehydro-2,3-deoxyribose 5'-phosphate)-DNA + a 5'-end 5'-phospho-2'-deoxyribonucleoside-DNA + H(+). Functionally, involved in base excision repair of DNA damaged by oxidation or by mutagenic agents. Acts as a DNA glycosylase that recognizes and removes damaged bases. Has a preference for oxidized purines, such as 7,8-dihydro-8-oxoguanine (8-oxoG). Has AP (apurinic/apyrimidinic) lyase activity and introduces nicks in the DNA strand. Cleaves the DNA backbone by beta-delta elimination to generate a single-strand break at the site of the removed base with both 3'- and 5'-phosphates. The chain is Formamidopyrimidine-DNA glycosylase from Bacillus licheniformis (strain ATCC 14580 / DSM 13 / JCM 2505 / CCUG 7422 / NBRC 12200 / NCIMB 9375 / NCTC 10341 / NRRL NRS-1264 / Gibson 46).